Here is a 289-residue protein sequence, read N- to C-terminus: Ribosomal RNA small subunit methyltransferase A (289 aa).

S-adenosyl-L-methionine contacts are provided by Asn-28, Leu-30, Gly-55, Glu-77, Asp-103, and Asn-122.

It belongs to the class I-like SAM-binding methyltransferase superfamily. rRNA adenine N(6)-methyltransferase family. RsmA subfamily.

It is found in the cytoplasm. It carries out the reaction adenosine(1518)/adenosine(1519) in 16S rRNA + 4 S-adenosyl-L-methionine = N(6)-dimethyladenosine(1518)/N(6)-dimethyladenosine(1519) in 16S rRNA + 4 S-adenosyl-L-homocysteine + 4 H(+). Functionally, specifically dimethylates two adjacent adenosines (A1518 and A1519) in the loop of a conserved hairpin near the 3'-end of 16S rRNA in the 30S particle. May play a critical role in biogenesis of 30S subunits. The sequence is that of Ribosomal RNA small subunit methyltransferase A from Jannaschia sp. (strain CCS1).